The chain runs to 185 residues: Ribosome-recycling factor (185 aa).

The segment at Asn-137–Glu-158 is disordered. The segment covering Lys-140–Glu-158 has biased composition (basic and acidic residues).

The protein belongs to the RRF family.

It is found in the cytoplasm. Functionally, responsible for the release of ribosomes from messenger RNA at the termination of protein biosynthesis. May increase the efficiency of translation by recycling ribosomes from one round of translation to another. This is Ribosome-recycling factor from Helicobacter pylori (strain P12).